Reading from the N-terminus, the 559-residue chain is Protein QNR-71 (559 aa).

Residues 1 to 22 (MSQAHRHLALLLPAEAVLCAAA) form the signal peptide. Residues 23–487 (MRFQDVLSNG…NGGSSSGTTK (465 aa)) lie on the Extracellular side of the membrane. N92, N133, N145, N149, N192, N199, N248, N274, N307, and N311 each carry an N-linked (GlcNAc...) asparagine glycan. In terms of domain architecture, PKD spans 239 to 326 (VSMSQKHDRN…IIPVPCKPVT (88 aa)). Residues 329–356 (PSLPTPAVTTDASSNSDPSAPNEMAEDN) form a disordered region. Residues 335–347 (AVTTDASSNSDPS) show a composition bias toward polar residues. N459 is a glycosylation site (N-linked (GlcNAc...) asparagine). Residues 488 to 508 (GVFIFLGLLAVFGAIGAFVLY) form a helical membrane-spanning segment. Over 509-559 (KRYKQYKPIERSAGQAENQEGLSAYVSNFKAFFFPKSTERNPLLKSKPGIV) the chain is Cytoplasmic.

The protein belongs to the PMEL/NMB family. As to expression, melanocyte-specific, restricted to the pigmented layer of the retina and the epidermis.

It is found in the membrane. In terms of biological role, could be involved in melanogenesis. The polypeptide is Protein QNR-71 (QNR-71) (Coturnix japonica (Japanese quail)).